The chain runs to 304 residues: Glutaminase (304 aa).

The substrate site is built by Ser-63, Asn-113, Glu-157, Asn-164, Tyr-188, Tyr-240, and Val-258.

It belongs to the glutaminase family. Homotetramer.

The catalysed reaction is L-glutamine + H2O = L-glutamate + NH4(+). This chain is Glutaminase, found in Paraburkholderia phytofirmans (strain DSM 17436 / LMG 22146 / PsJN) (Burkholderia phytofirmans).